The following is a 233-amino-acid chain: Snake venom serine protease ussurase (233 aa).

The Peptidase S1 domain occupies 1–224 (VIGGVECNIN…YTDWIQSIIS (224 aa)). 6 disulfides stabilise this stretch: Cys-7–Cys-138, Cys-25–Cys-41, Cys-73–Cys-231, Cys-117–Cys-185, Cys-149–Cys-164, and Cys-175–Cys-200. Catalysis depends on His-40, which acts as the Charge relay system. N-linked (GlcNAc...) asparagine glycosylation occurs at Asn-54. The active-site Charge relay system is the Asp-85. The active-site Charge relay system is the Ser-179.

The protein belongs to the peptidase S1 family. Snake venom subfamily. As to quaternary structure, monomer. In terms of tissue distribution, expressed by the venom gland.

The protein localises to the secreted. Snake venom serine protease that may act in the hemostasis system of the prey. In Gloydius ussuriensis (Ussuri mamushi), this protein is Snake venom serine protease ussurase.